Here is a 34-residue protein sequence, read N- to C-terminus: uncharacterized protein (34 aa).

This is an uncharacterized protein from Escherichia coli (Bacteriophage T4).